A 430-amino-acid polypeptide reads, in one-letter code: Adenylosuccinate synthetase (430 aa).

Residues 12 to 18 (GDEGKGK) and 40 to 42 (GHT) contribute to the GTP site. Asp-13 acts as the Proton acceptor in catalysis. Asp-13 and Gly-40 together coordinate Mg(2+). Residues 13–16 (DEGK), 38–41 (NAGH), Thr-130, Arg-144, Gln-224, Thr-239, and Arg-303 contribute to the IMP site. Residue His-41 is the Proton donor of the active site. 299–305 (VNTGRKR) is a binding site for substrate. Residues Arg-305, 331-333 (KLD), and 413-415 (STS) contribute to the GTP site.

The protein belongs to the adenylosuccinate synthetase family. As to quaternary structure, homodimer. Requires Mg(2+) as cofactor.

The protein resides in the cytoplasm. The enzyme catalyses IMP + L-aspartate + GTP = N(6)-(1,2-dicarboxyethyl)-AMP + GDP + phosphate + 2 H(+). The protein operates within purine metabolism; AMP biosynthesis via de novo pathway; AMP from IMP: step 1/2. In terms of biological role, plays an important role in the de novo pathway of purine nucleotide biosynthesis. Catalyzes the first committed step in the biosynthesis of AMP from IMP. The sequence is that of Adenylosuccinate synthetase from Rhodopseudomonas palustris (strain TIE-1).